A 1651-amino-acid chain; its full sequence is MDSKKKSSAEAEGSKERGLVHVWQAGSFSLTPERLPGWGGKTVLQAALGVKHGVLLTEDGEVYSFGTLPWKSEAAEICPSSPLLESALVGHHVVTVATGSFHSGAVTESGVVYMWGENAAGQCAVANQQYVSEPSPVSISDSETSPLLAVRILQLACGEEHTLALSISREIWAWGTGCQLGLITTTFPVTKPQKVEHLAGRVVLQVACGAFHSLALVQCLPPQDLKPVPERCNQCSQLLITMTDKEDHVIISDSHCCPLGVTLSESQAEKHASTVTSPHPETLDGQGEVFENTVAEAELNMGSDQTTSGSAISAQQNIVGMAEVSSARTAPSYPDTQTVTAYLQKLSEHSVKENHEREEKLPQVQPLVEEAVPDLHSPPTTSTSALNSLVVSCASAVGVRVAATYEAGALSLKKVMNFYSTAPCEPGAPSGTASTGPESLKDLREEQVKQESLQGKKSSSLMDIREEESEGGSRRLSLPGLLSQVSPRLLRKAARVKTRTVVLTPTYSGEADALLPSLRTEVWTWGKGKEGQLGHGDVLPRLQPLCVKCLDGKEVIHLEAGGSHSLALTAKSQVYSWGSNTFGQLGHSEFPTTVPRLSKVSSESGVWSVAAGHGYSLFLVDTEDFQPGLYYSGRQDRAEGDTLPENPSGTTTPVLLSCSKLGYISRVTAGKDSYLALVDKNIMGYIASLHELATTERRFYSKLSEIKSQILRPLLSLEHLGTVTTVQLLQEVASRFSKLCYLIGQHGASLSSYLQGMKEARNLVIMKHSSLFLDSYTEYCTSVSNFLVMGGSQLLAKPAIDFLNKNQELLQDLSEVNDENTQLMEILNALFFLPIRRLHNYAKVLLKLATCFEVTSPEYQKLQDSSSCYESLALHLGKKRKEAEYTLSFWKTFPGKMTDSLRKPERRLLCESSNRALSLQHAGRFSVNWFILFNDALVHAQFSTHHVFPLATLWAEPLSEETGGVNGLKITTPEEQFTLISSTPQEKTKWLRAISQAVDQALRGTSDFPLYGGSSTVQRQEPPISRSAKYTFYKDTRLKDATYDGRWLSGKPHGRGVLKWPDGKVYSGTFRNGLEDGYGEYRIPNKALNKEDHYVGHWKEGKMCGQGVYSYASGEVFEGCFQDNMRHGHGLLRSGKLTSSSPSMFIGQWVMDKKAGYGVFDDITRGEKYMGMWQDDACQGNGVVVTQFGLYYEGNFHLNKMMGNGVLLSEDDTIYEGEFSDDWTLCGKGTLTMPNGDYIEGYFSGEWGSGIKITGTYFKPSLYESDKDRPKAFRKLGNLAVAADEKWRAVFDECWRQLGCESPGQGEVWKAWDNIAVALTTNRRQHKDSPEILSRSQTQTLESLEYIPQHVGAFSVEKYDDIKKYLIKACDTPLHPLGRLVETLVAVYRMTYVGVGANRRLLQEAVKEIKSYLKRIFQLVRFLFPELPEEGSTVPLSAPLPTGRRSFCTGKSDSRSESPEPGYVVTSSGLLLPVLLPRLYPPLFMLYALDNDREEDIYWECVLRLNKQPDIALLGFLGVQRKFWPATLSILGESKKVLPSTKDACFASAVECLQQISTTFTPSDKLKVIQQTFEEISQSVLASLQEDFLWSMDDLFPVFLYVVLRARIRNLGSEVHLIEDLMDPYLQHGEQGIMFTTLKACYYQIQREKLN.

3 RCC1 repeats span residues 59–108, 109–167, and 169–218; these read DGEV…AVTE, SGVV…ALSI, and REIW…ALVQ. Positions 444 to 476 are disordered; the sequence is REEQVKQESLQGKKSSSLMDIREEESEGGSRRL. Residues 450 to 461 are compositionally biased toward polar residues; that stretch reads QESLQGKKSSSL. Residues Ser-459, Ser-460, Ser-477, and Ser-486 each carry the phosphoserine modification. A Phosphothreonine modification is found at Thr-504. RCC1 repeat units lie at residues 519–570 and 572–621; these read RTEV…ALTA and SQVY…FLVD. Lys-527 carries the N6-acetyllysine modification. Residues 684–879 enclose the DH domain; the sequence is GYIASLHELA…ESLALHLGKK (196 aa). One can recognise a PH domain in the interval 895 to 1001; it reads GKMTDSLRKP…RAISQAVDQA (107 aa). 8 MORN repeats span residues 1043–1065, 1066–1088, 1094–1116, 1117–1139, 1145–1167, 1169–1191, 1192–1214, and 1215–1238; these read YDGR…DGKV, YSGT…NKAL, YVGH…SGEV, FEGC…KLTS, FIGQ…TRGE, YMGM…FGLY, YEGN…DDTI, and YEGE…NGDY. A Phosphoserine modification is found at Ser-1329. A VPS9 domain is found at 1507–1651; it reads KQPDIALLGF…YYQIQREKLN (145 aa).

In terms of assembly, forms a heteromeric complex with ALS2CL. Interacts with ALS2CL.

Functionally, may act as a GTPase regulator. Controls survival and growth of spinal motoneurons. This Rattus norvegicus (Rat) protein is Alsin (Als2).